The sequence spans 443 residues: MESLASLYKNHIATLQKRARDALARFKLDALLIHSGELFNVFLDDHPYPFKVNPQFKAWVPVTQVPNCWLLVDGVNKPKLWFYLPVDYWHNVEPLPTSFWTEDVEVIALPKADGIGSLLPAARGNIGYIGPVPERALQLGIEASNINPKGVIDYLHYYRSFKTEYELACMREAQKMAVNGHRAAEEAFRSGMSEFDINIAYLTATGHRDTDVPYSNIVALNEHAAVLHYTKLDHQAPEEMRSFLLDAGAEYNGYAADLTRTWSAKSDNDYAQLVKDVNDEQLALIATMKAGVSYVDYHIQFHQRIAKLLRKHQIITDMSEEAMVENDLTGPFMPHGIGHPLGLQVHDVAGFMQDDSGTHLAAPAKYPYLRCTRILQPGMVLTIEPGIYFIESLLAPWREGQFSKHFNWQKIEALKPFGGIRIEDNVVIHENNVENMTRDLKLA.

Residues D246, D257, H339, E384, and E423 each coordinate Mn(2+).

This sequence belongs to the peptidase M24B family. Bacterial-type prolidase subfamily. Requires Mn(2+) as cofactor.

The enzyme catalyses Xaa-L-Pro dipeptide + H2O = an L-alpha-amino acid + L-proline. Its function is as follows. Splits dipeptides with a prolyl residue in the C-terminal position. The protein is Xaa-Pro dipeptidase of Escherichia fergusonii (strain ATCC 35469 / DSM 13698 / CCUG 18766 / IAM 14443 / JCM 21226 / LMG 7866 / NBRC 102419 / NCTC 12128 / CDC 0568-73).